The following is a 585-amino-acid chain: Glutathione S-transferase C-terminal domain-containing protein homolog (585 aa).

The GST C-terminal domain maps to 120–275; the sequence is LGFKGSCLLA…DKCARVLRDL (156 aa).

This sequence belongs to the GSTCD family.

In Drosophila melanogaster (Fruit fly), this protein is Glutathione S-transferase C-terminal domain-containing protein homolog.